Here is a 403-residue protein sequence, read N- to C-terminus: Phosphopentomutase (403 aa).

Mn(2+)-binding residues include Asp13, Asp298, His303, Asp339, His340, and His351.

The protein belongs to the phosphopentomutase family. The cofactor is Mn(2+).

Its subcellular location is the cytoplasm. The catalysed reaction is 2-deoxy-alpha-D-ribose 1-phosphate = 2-deoxy-D-ribose 5-phosphate. It carries out the reaction alpha-D-ribose 1-phosphate = D-ribose 5-phosphate. It participates in carbohydrate degradation; 2-deoxy-D-ribose 1-phosphate degradation; D-glyceraldehyde 3-phosphate and acetaldehyde from 2-deoxy-alpha-D-ribose 1-phosphate: step 1/2. In terms of biological role, isomerase that catalyzes the conversion of deoxy-ribose 1-phosphate (dRib-1-P) and ribose 1-phosphate (Rib-1-P) to deoxy-ribose 5-phosphate (dRib-5-P) and ribose 5-phosphate (Rib-5-P), respectively. The chain is Phosphopentomutase from Streptococcus pyogenes serotype M28 (strain MGAS6180).